The following is a 254-amino-acid chain: Isoprenyl transferase (254 aa).

The active site involves aspartate 12. Aspartate 12 serves as a coordination point for Mg(2+). Residues 13-16 (GNGR), tryptophan 17, arginine 25, histidine 29, and 57-59 (SSE) each bind substrate. The active-site Proton acceptor is the asparagine 60. Residues tryptophan 61, arginine 63, arginine 180, and 186–188 (RLS) each bind substrate. Glutamate 199 is a binding site for Mg(2+).

Belongs to the UPP synthase family. As to quaternary structure, homodimer. Requires Mg(2+) as cofactor.

Functionally, catalyzes the condensation of isopentenyl diphosphate (IPP) with allylic pyrophosphates generating different type of terpenoids. In Brucella abortus biovar 1 (strain 9-941), this protein is Isoprenyl transferase.